A 160-amino-acid polypeptide reads, in one-letter code: Keratin-associated protein 9-6 (160 aa).

Tandem repeats lie at residues 4 to 8 (CCSPG), 13 to 17 (CCRTT), 18 to 22 (CCRTT), 37 to 41 (CCQPS), 42 to 46 (CCVSS), 47 to 51 (CCQPY), 56 to 60 (CCQNT), 61 to 65 (CCRTT), 66 to 70 (CCQPT), 75 to 79 (CCQPS), 80 to 84 (CCSTP), 90 to 94 (CCGSS), 95 to 99 (CCGQT), 140 to 144 (CCQPC), 149 to 153 (CCVSS), and 154 to 158 (CCQHS). The tract at residues 4–158 (CCSPGCQPTC…CCVSSCCQHS (155 aa)) is 16 X 5 AA repeats of C-C-[GSVRQ]-[QTSPHN]-[TPSGYC].

The protein belongs to the KRTAP type 9 family. As to quaternary structure, interacts with hair keratins.

In the hair cortex, hair keratin intermediate filaments are embedded in an interfilamentous matrix, consisting of hair keratin-associated proteins (KRTAP), which are essential for the formation of a rigid and resistant hair shaft through their extensive disulfide bond cross-linking with abundant cysteine residues of hair keratins. The matrix proteins include the high-sulfur and high-glycine-tyrosine keratins. The protein is Keratin-associated protein 9-6 of Homo sapiens (Human).